The sequence spans 269 residues: uncharacterized protein (269 aa).

Transmembrane regions (helical) follow at residues 64–84 (FVYF…LAGV), 125–145 (YGIA…FLSF), 169–189 (FFIS…FLVL), and 230–250 (VFAT…IAIF).

Its subcellular location is the cell membrane. This is an uncharacterized protein from Mycoplasma genitalium (strain ATCC 33530 / DSM 19775 / NCTC 10195 / G37) (Mycoplasmoides genitalium).